The sequence spans 463 residues: A-type ATP synthase subunit B (463 aa).

This sequence belongs to the ATPase alpha/beta chains family. As to quaternary structure, has multiple subunits with at least A(3), B(3), C, D, E, F, H, I and proteolipid K(x).

Its subcellular location is the cell membrane. In terms of biological role, component of the A-type ATP synthase that produces ATP from ADP in the presence of a proton gradient across the membrane. The B chain is a regulatory subunit. The chain is A-type ATP synthase subunit B from Methanothrix thermoacetophila (strain DSM 6194 / JCM 14653 / NBRC 101360 / PT) (Methanosaeta thermophila).